A 719-amino-acid chain; its full sequence is MVSKSFKYPKKHKFEWINETNRVERVGSGLKRVILCPSMELIAILTCSNHLICCRSNSQRIWDVDFHDLEATELCWNHDGNLIVVGFKNGELKIIDSSTGHLVEQRPASRDLAVLMITWAMQETIVNEKRNDFLFDATAYMPLLGTLPSSAKEERIFSSKAIAQFFEPRKREGENNKKVELLSILDERGIRYINMFSSYKIGESDSLKSALNLGVPISHSITNDLAYHVLICKGGTNISLKTLYMPLLKNDLGSIVDIATMSTRMQHLVRYLEEVLNAMYEEFDNVFKSEASFIKTFDALVSKYSDTTFFSLQLELYQFIMNGIPSDLLKEWINERVGDRVLKNWERAMVNSYTSLIIFCQEFVIPACERLTVLLSSARGKSIWGHMKGNTLLDAKLVEDCLATLGYLQNNVFSFLNCLFEEKKYMKHFISWLNYAIVEFNTSEPSSIPPQEIIEHINETVIYIRHSLFRSKLTSYFMGTKPLQLRDPDYYSLKDFANQDDSNSVDDFVSFKTLKESLRDSFNVIFSYPSLTCQKQWLKTGDLVLFEGTDWNVSSLIPKSCNEKNQLFSLFFRKDTPNIFLIISQLMENTMLPVSGCHFGLDYAELLGSSLLDFQPATVLDMKLLNGSSILILGKLKEKCFLCEICLADVPLTFFEHQQKNSYLDAISHLPFIPLNSCLWLHEFEKDFLPSTLEYALSENSDYGVLISRESSRYRLFSF.

A WD repeat occupies 57–96 (NSQRIWDVDFHDLEATELCWNHDGNLIVVGFKNGELKIID).

The APC/C is composed of at least 13 subunits: apc1, apc2, nuc2, apc4, apc5, cut9, apc8, apc10, apc11, hcn1, apc13, apc14 and apc15. Interacts with apc1 and dim1.

Functionally, component of the anaphase-promoting complex/cyclosome (APC/C), a cell cycle-regulated E3 ubiquitin-protein ligase complex that controls progression through mitosis and the G1 phase of the cell cycle. The APC/C is thought to confer substrate specificity and, in the presence of ubiquitin-conjugating E2 enzymes, it catalyzes the formation of protein-ubiquitin conjugates that are subsequently degraded by the 26S proteasome. Has a role in promoting metaphase to anaphase transition via the ubiquitination of specific mitotic substrates. The chain is Anaphase-promoting complex subunit 4 (cut20) from Schizosaccharomyces pombe (strain 972 / ATCC 24843) (Fission yeast).